The following is a 256-amino-acid chain: 6-carboxyhexanoate--CoA ligase (256 aa).

Belongs to the BioW family. In terms of assembly, homodimer. It depends on Mg(2+) as a cofactor.

The enzyme catalyses heptanedioate + ATP + CoA = 6-carboxyhexanoyl-CoA + AMP + diphosphate. The protein operates within metabolic intermediate metabolism; pimeloyl-CoA biosynthesis; pimeloyl-CoA from pimelate: step 1/1. Functionally, catalyzes the transformation of pimelate into pimeloyl-CoA with concomitant hydrolysis of ATP to AMP. This chain is 6-carboxyhexanoate--CoA ligase, found in Methanobrevibacter ruminantium (strain ATCC 35063 / DSM 1093 / JCM 13430 / OCM 146 / M1) (Methanobacterium ruminantium).